A 354-amino-acid chain; its full sequence is Galactoside alpha-(1,2)-fucosyltransferase 2 (354 aa).

Topologically, residues 1-5 (MASAQ) are cytoplasmic. Residues 6–26 (VPFSFPLAHFLIFVFVTSTIT) traverse the membrane as a helical; Signal-anchor for type II membrane protein segment. Residues 27-354 (HLQQRIVKLQ…PADLSPLLKH (328 aa)) are Lumenal-facing. The disordered stretch occupies residues 43-68 (LPMTTQMSSGNTESPEMRRDSEQHGN). A compositionally biased stretch (polar residues) spans 45-56 (MTTQMSSGNTES). Basic and acidic residues predominate over residues 57 to 68 (PEMRRDSEQHGN). The N-linked (GlcNAc...) asparagine glycan is linked to N199.

The protein belongs to the glycosyltransferase 11 family. In terms of tissue distribution, specifically expressed in gut.

It localises to the golgi apparatus. Its subcellular location is the golgi stack membrane. It catalyses the reaction a beta-D-galactosyl-(1-&gt;3)-N-acetyl-beta-D-glucosaminyl derivative + GDP-beta-L-fucose = an alpha-L-Fuc-(1-&gt;2)-beta-D-Gal-(1-&gt;3)-beta-D-GlcNAc derivative + GDP + H(+). It carries out the reaction a beta-D-galactosyl-(1-&gt;4)-N-acetyl-beta-D-glucosaminyl derivative + GDP-beta-L-fucose = an alpha-L-Fuc-(1-&gt;2)-beta-D-Gal-(1-&gt;4)-beta-D-GlcNAc derivative + GDP + H(+). The catalysed reaction is a ganglioside GM1 (d18:1(4E)) + GDP-beta-L-fucose = a ganglioside Fuc-GM1 (d18:1(4E)) + GDP + H(+). The enzyme catalyses a globoside GalGb4Cer (d18:1(4E)) + GDP-beta-L-fucose = a globoside Globo-H (d18:1(4E)) + GDP + H(+). It catalyses the reaction a neolactoside nLc4Cer + GDP-beta-L-fucose = a neolactoside IV(2)-alpha-Fuc-nLc4Cer + GDP + H(+). It carries out the reaction a neolactoside nLc4Cer(d18:1(4E)) + GDP-beta-L-fucose = a neolactoside IV(2)-alpha-Fuc-nLc4Cer(d18:1(4E)) + GDP + H(+). The catalysed reaction is a ganglioside GM1 + GDP-beta-L-fucose = a ganglioside Fuc-GM1 + GDP + H(+). The enzyme catalyses a ganglioside GA1 + GDP-beta-L-fucose = a ganglioside Fuc-GA1 + GDP + H(+). It catalyses the reaction Lc4Cer + GDP-beta-L-fucose = alpha-L-fucosyl-(1-&gt;2)-beta-D-galactosyl-(1-&gt;3)-N-acetyl-beta-D-glucosaminyl-(1-&gt;3)-beta-D-galactosyl-(1-&gt;4)-beta-D-glucosyl-(1&lt;-&gt;1')-ceramide + GDP + H(+). It carries out the reaction a beta-D-Gal-(1-&gt;3)-beta-D-GlcNAc-(1-&gt;3)-beta-D-Gal-(1-&gt;4)-beta-D-Glc-(1&lt;-&gt;1')-Cer(d18:1(4E)) + GDP-beta-L-fucose = alpha-L-fucosyl-(1-&gt;2)- beta-D-galactosyl-(1-&gt;3)-N-acetyl-beta-D-glucosaminyl-(1-&gt;3)-beta-D-galactosyl-(1-&gt;4)-beta-D-glucosyl-(1&lt;-&gt;1')-N-acylsphing-4-enine + GDP + H(+). The catalysed reaction is a ganglioside GD1b + GDP-beta-L-fucose = a ganglioside Fuc-GD1b + GDP + H(+). The enzyme catalyses a lactoside III(4)-a-Fuc-Lc4Cer + GDP-beta-L-fucose = a lactoside IV(2),III(4)-a-[Fuc]2-Lc4Cer + GDP + H(+). It catalyses the reaction beta-D-galactosyl-(1-&gt;3)-N-acetyl-D-galactosamine + GDP-beta-L-fucose = alpha-L-fucosyl-(1-&gt;2)-beta-D-galactosyl-(1-&gt;3)-N-acetyl-D-galactosamine + GDP + H(+). It participates in protein modification; protein glycosylation. Catalyzes the transfer of L-fucose, from a guanosine diphosphate-beta-L-fucose, to the terminal galactose on both O- and N-linked glycans chains of cell surface glycoproteins and glycolipids and the resulting epitope regulates several processes such as cell-cell interaction including host-microbe interaction, cell surface expression and cell proliferation. Preferentially fucosylates gangliosides GA1 and GM1 in the antrum, cecum and colon and in the female reproductive organs. Fucosylated host glycoproteins or glycolipids mediate interaction with intestinal microbiota influencing its composition. Creates a soluble precursor oligosaccharide FuC-alpha ((1,2)Galbeta-) called the H antigen which is an essential substrate for the final step in the soluble ABO blood group antigen synthesis pathway. The polypeptide is Galactoside alpha-(1,2)-fucosyltransferase 2 (Rattus norvegicus (Rat)).